Here is a 265-residue protein sequence, read N- to C-terminus: Type II pantothenate kinase (265 aa).

ATP is bound at residue 6 to 13; that stretch reads DAGGTLIK. Residue glutamate 70 is the Proton acceptor of the active site. ATP-binding positions include threonine 99, 121–125, tyrosine 137, and serine 225; that span reads GGMIQ.

Belongs to the type II pantothenate kinase family. Homodimer.

The protein resides in the cytoplasm. It carries out the reaction (R)-pantothenate + ATP = (R)-4'-phosphopantothenate + ADP + H(+). It functions in the pathway cofactor biosynthesis; coenzyme A biosynthesis; CoA from (R)-pantothenate: step 1/5. Functionally, catalyzes the phosphorylation of pantothenate (Pan), the first step in CoA biosynthesis. In Staphylococcus saprophyticus subsp. saprophyticus (strain ATCC 15305 / DSM 20229 / NCIMB 8711 / NCTC 7292 / S-41), this protein is Type II pantothenate kinase.